A 247-amino-acid polypeptide reads, in one-letter code: UPF0309 protein Teth39_1980 (247 aa).

Positions 31–213 (IANSLLKEED…EAEIVFIMIK (183 aa)) constitute an SIS domain.

This sequence belongs to the UPF0309 family.

The sequence is that of UPF0309 protein Teth39_1980 from Thermoanaerobacter pseudethanolicus (strain ATCC 33223 / 39E) (Clostridium thermohydrosulfuricum).